Consider the following 117-residue polypeptide: Large ribosomal subunit protein bL19 (117 aa).

Belongs to the bacterial ribosomal protein bL19 family.

In terms of biological role, this protein is located at the 30S-50S ribosomal subunit interface and may play a role in the structure and function of the aminoacyl-tRNA binding site. The sequence is that of Large ribosomal subunit protein bL19 from Exiguobacterium sibiricum (strain DSM 17290 / CCUG 55495 / CIP 109462 / JCM 13490 / 255-15).